Here is a 119-residue protein sequence, read N- to C-terminus: Large ribosomal subunit protein bL20 (119 aa).

The protein belongs to the bacterial ribosomal protein bL20 family.

In terms of biological role, binds directly to 23S ribosomal RNA and is necessary for the in vitro assembly process of the 50S ribosomal subunit. It is not involved in the protein synthesizing functions of that subunit. The sequence is that of Large ribosomal subunit protein bL20 from Shewanella amazonensis (strain ATCC BAA-1098 / SB2B).